Reading from the N-terminus, the 80-residue chain is MHRTFYEYLMTLRNPNDHSEIAEFAKNAFLDQSFPKQEKDYHRLSDYLELNGNYLPSMAVFDETYRAYEASESTGGDSYQ.

Belongs to the UPF0346 family.

The protein is UPF0346 protein LSEI_1394 of Lacticaseibacillus paracasei (strain ATCC 334 / BCRC 17002 / CCUG 31169 / CIP 107868 / KCTC 3260 / NRRL B-441) (Lactobacillus paracasei).